Consider the following 862-residue polypeptide: Fork head protein homolog 2 (862 aa).

The FHA domain maps to 83-152 (VSIGRNTDPL…NGAKVNFQRT (70 aa)). Positions 339 to 430 (VKPPHSYATM…QQEFLNKWNT (92 aa)) form a DNA-binding region, fork-head. Disordered regions lie at residues 498–528 (PSKG…QEQR), 611–663 (SDSA…GTTT), 698–730 (PERG…LQTS), and 750–846 (ESNN…ANAK). Low complexity predominate over residues 504–520 (PASQQSQPPVSHQNQSQ). Polar residues predominate over residues 611-644 (SDSADKSTNNNGGTKMNLPAISTSSLDENGNLEP). The span at 645-655 (TTTTSSGNSNS) shows a compositional bias: low complexity. Residue serine 708 is modified to Phosphoserine. Positions 712–726 (SNSNNTNNNGANNSN) are enriched in low complexity. 2 stretches are compositionally biased toward polar residues: residues 750 to 770 (ESNN…NVKS) and 778 to 788 (LQFSSTNNTPA). The segment covering 804 to 829 (IKAKENENATSEKDSDSNSNDLETKD) has biased composition (basic and acidic residues). Over residues 830 to 844 (INSSPLKNQGGSTAN) the composition is skewed to polar residues. Phosphoserine is present on residues serine 832 and serine 833.

As to quaternary structure, interacts with MCM1. Interacts with NDD1. Interacts with the origin recognition complex (ORC) composed of ORC1 to ORC6.

Its subcellular location is the nucleus. The protein resides in the cytoplasm. It localises to the cytosol. Its function is as follows. Transcription factor that regulates the expression of the CLB2 cluster of genes during the G2/M phase of the mitotic cell cycle. The CLB2 cluster of genes includes mitotic regulators such as CLB1, CLB2, CDC5 and CDC20 as well as SWI5 and ACE2, transcription factors required for the subsequent temporal wave of cell cycle regulated gene expression in the M/G1 phase interval. Involved in HMRa silencing. FKH1 and FKH2 associate with the coding regions of active genes and influence, in opposing ways, transcriptional elongation and termination, and coordinate early transcription elongation and pre-mRNA processing. Both FKH1 and FKH2 play a role as regulators of lifespan in collaboration with the anaphase-promoting complex (APC), likely through combined regulation of stress response, genomic stability, and cell cycle regulation. FKH1 and FKH2 function also in controlling yeast cell morphology by preventing preudohyphal growth. Acts as a rate-limiting replication origin activator via its interaction with the origin recognition complex (ORC). In Saccharomyces cerevisiae (strain ATCC 204508 / S288c) (Baker's yeast), this protein is Fork head protein homolog 2.